Reading from the N-terminus, the 419-residue chain is Acetyltransferase fsoF (419 aa).

N2 carries N-linked (GlcNAc...) asparagine glycosylation. Helical transmembrane passes span 4–24 and 62–82; these read TIIS…VVGF and AFLG…AILS. A disordered region spans residues 89–114; the sequence is QSPTSSLGGLIPPTTRDTPKTQNNAT. 2 N-linked (GlcNAc...) asparagine glycosylation sites follow: N112 and N169. 4 helical membrane passes run 230 to 250, 314 to 334, 337 to 357, and 386 to 406; these read YWAI…VVAV, YVFM…SDVS, IPLG…GIML, and VSGP…WIYM.

This sequence belongs to the wax synthase family.

The protein resides in the membrane. It carries out the reaction 3-O-(beta-D-glucopyranosyl)-2alpha-hydroxyisomotiol + acetyl-CoA = 3-O-(beta-D-glucopyranosyl)-2alpha-acetoxyisomotiol + CoA. The enzyme catalyses 2-deacetylfuscoatroside + acetyl-CoA = fuscoatroside + CoA. It participates in secondary metabolite biosynthesis; terpenoid biosynthesis. Functionally, terpene cyclase-glycosyl transferase fusion protein; part of the gene cluster that mediates the biosynthesis of the enfumafungin-type antibiotic, fuscoatroside. Within the pathway, fsoF catalyzes the acetylation of C2-alpha-OH following the C2 hydroxylation by the cytochrome monooxygenase fsoD. The fuscoatroside biosynthesis is initiated by the cyclization of 2,3(S)-oxidosqualene through FsoA's terpene cyclase (TC) domain, leading to the formation of the fernane skeleton isomotiol, harboring a fernane triterpene skeleton with a C8-C9 double bond. Subsequently, C2-alpha-hydroxylation mediated by fsoD results in the production of 2-alpha-hydroxy-isomotiol, which is further acetylated by fsoF. The glycosyltransferase (GT) domain of FsoA may convert isomotiol, 2-alpha-hydroxy-isomotiol, and the acetylated derivative of 2-alpha-hydroxy-isomotiol into their corresponding glycosides 3-O-(beta-D-glucopyranosyl)-isomotiol, 3-O-(beta-D-glucopyranosyl)-2-alpha-hydroxy-isomotiol, and 3-O-(beta-D-glucopyranosyl)-2-alpha-acetoxy-isomotiol, which then undergo oxidative cleavage under the action of fsoE to form s 2-deacetoxy-fuscoatroside, 2-deacetyl-fuscoatroside, and fuscoatroside, respectively. Although hydroxylation followed by acetylation of 3-O-(beta-D-glucopyranosyl)-isomotiol and 2-deacetoxy-fuscoatroside by fsoD and fsoF could not be ruled out, this process is likely to occur with difficulty due to bulky steric hindrance caused by the presence of a glycan at C3 in these compounds. Interestingly, fsoE can also utilize the aglycones isomotiol and 2-alpha-hydroxy-isomotiol as substrates to generate 19-beta-hydroxy-isomotiol and 2-alpha,19-beta-dihydroxy-isomotiol, respectively. These reactions occur with lower efficiency. Finally, fsoE can further convert 2-alpha,19-beta-dihydroxy-isomotiol into 2-alpha-hydroxy-ismotiol-19-one and 2-alpha-hydroxy-ismotiol-19-one into 2-deacetyl-3-deglucopyranosyl-fuscoatroside. This Humicola fuscoatra protein is Acetyltransferase fsoF.